The chain runs to 196 residues: 7-methyl-GTP pyrophosphatase (196 aa).

Catalysis depends on D72, which acts as the Proton acceptor.

Belongs to the Maf family. YceF subfamily. It depends on a divalent metal cation as a cofactor.

The protein localises to the cytoplasm. The enzyme catalyses N(7)-methyl-GTP + H2O = N(7)-methyl-GMP + diphosphate + H(+). Its function is as follows. Nucleoside triphosphate pyrophosphatase that hydrolyzes 7-methyl-GTP (m(7)GTP). May have a dual role in cell division arrest and in preventing the incorporation of modified nucleotides into cellular nucleic acids. The protein is 7-methyl-GTP pyrophosphatase of Neisseria gonorrhoeae (strain ATCC 700825 / FA 1090).